Here is a 393-residue protein sequence, read N- to C-terminus: Phosphoglycerate kinase (393 aa).

Residues 21-23, Arg-36, 59-62, Arg-114, and Arg-147 each bind substrate; these read DLN and HLGR. Residues Lys-198, Glu-314, and 340–343 each bind ATP; that span reads GGDT.

Belongs to the phosphoglycerate kinase family. Monomer.

The protein localises to the cytoplasm. It carries out the reaction (2R)-3-phosphoglycerate + ATP = (2R)-3-phospho-glyceroyl phosphate + ADP. It functions in the pathway carbohydrate degradation; glycolysis; pyruvate from D-glyceraldehyde 3-phosphate: step 2/5. This chain is Phosphoglycerate kinase, found in Buchnera aphidicola subsp. Baizongia pistaciae (strain Bp).